The chain runs to 1495 residues: Nuclear pore complex protein NUP160 (1495 aa).

As to quaternary structure, part of the nuclear pore complex (NPC). The NPC has an eight-fold symmetrical structure comprising a central transport channel and two rings, the cytoplasmic and nuclear rings, to which eight filaments are attached. The cytoplasmic filaments have loose ends, while the nuclear filaments are joined in a distal ring, forming a nuclear basket. NPCs are highly dynamic in configuration and composition, and can be devided in 3 subcomplexes, the NUP62 subcomplex, the NUP107-160 subcomplex and the NUP93 subcomplex, containing approximately 30 different nucleoporin proteins. As to expression, expressed in roots, stems, anthers, siliques and vascular tissues of cotyledons, leaves and hypocotyls.

It is found in the nucleus membrane. The protein resides in the nucleus. Its subcellular location is the nuclear pore complex. In terms of biological role, contributes to the transfer of mature mRNA from the nucleus to the cytosol. Required for both R gene-mediated and basal disease resistance. RNA export seems to play a critical role in stress responses and regulation of plant growth and development. Required for proper expression of factors associated with auxin signaling. This Arabidopsis thaliana (Mouse-ear cress) protein is Nuclear pore complex protein NUP160.